A 374-amino-acid chain; its full sequence is Copper-containing nitrite reductase (374 aa).

The segment at residues 1-31 (MFTRRAALVGAAALASAPLVIRTAGAEEAPA) is a signal peptide (tat-type signal). 2 consecutive Plastocyanin-like domains span residues 93 to 189 (MTFD…IMVL) and 254 to 355 (GAVG…VLVE). Cu cation-binding residues include His126, His131, His166, Cys167, His177, Met182, and His338.

Belongs to the multicopper oxidase family. In terms of assembly, homotrimer. It depends on Cu(2+) as a cofactor. The cofactor is Cu(+). Requires FAD as cofactor. Predicted to be exported by the Tat system. The position of the signal peptide cleavage has not been experimentally proven.

It localises to the periplasm. It carries out the reaction nitric oxide + Fe(III)-[cytochrome c] + H2O = Fe(II)-[cytochrome c] + nitrite + 2 H(+). It functions in the pathway nitrogen metabolism; nitrate reduction (denitrification); dinitrogen from nitrate: step 2/4. This chain is Copper-containing nitrite reductase (nirK), found in Cereibacter sphaeroides (strain ATCC 17025 / ATH 2.4.3) (Rhodobacter sphaeroides).